Reading from the N-terminus, the 337-residue chain is Undecaprenyl-phosphate 4-deoxy-4-formamido-L-arabinose transferase (337 aa).

Helical transmembrane passes span 235 to 255 (LSII…LLII) and 270 to 290 (FVLF…MGLL).

Belongs to the glycosyltransferase 2 family.

The protein resides in the cell inner membrane. It carries out the reaction UDP-4-deoxy-4-formamido-beta-L-arabinose + di-trans,octa-cis-undecaprenyl phosphate = 4-deoxy-4-formamido-alpha-L-arabinopyranosyl di-trans,octa-cis-undecaprenyl phosphate + UDP. The protein operates within glycolipid biosynthesis; 4-amino-4-deoxy-alpha-L-arabinose undecaprenyl phosphate biosynthesis; 4-amino-4-deoxy-alpha-L-arabinose undecaprenyl phosphate from UDP-4-deoxy-4-formamido-beta-L-arabinose and undecaprenyl phosphate: step 1/2. It functions in the pathway bacterial outer membrane biogenesis; lipopolysaccharide biosynthesis. Catalyzes the transfer of 4-deoxy-4-formamido-L-arabinose from UDP to undecaprenyl phosphate. The modified arabinose is attached to lipid A and is required for resistance to polymyxin and cationic antimicrobial peptides. The protein is Undecaprenyl-phosphate 4-deoxy-4-formamido-L-arabinose transferase of Pseudomonas savastanoi pv. phaseolicola (strain 1448A / Race 6) (Pseudomonas syringae pv. phaseolicola (strain 1448A / Race 6)).